A 61-amino-acid chain; its full sequence is Small ribosomal subunit protein uS14 (61 aa).

Positions 24, 27, 40, and 43 each coordinate Zn(2+).

Belongs to the universal ribosomal protein uS14 family. Zinc-binding uS14 subfamily. In terms of assembly, part of the 30S ribosomal subunit. Contacts proteins S3 and S10. Requires Zn(2+) as cofactor.

In terms of biological role, binds 16S rRNA, required for the assembly of 30S particles and may also be responsible for determining the conformation of the 16S rRNA at the A site. The polypeptide is Small ribosomal subunit protein uS14 (Desulfotalea psychrophila (strain LSv54 / DSM 12343)).